A 229-amino-acid polypeptide reads, in one-letter code: Cytochrome c oxidase subunit 2 (229 aa).

Residues 1–26 lie on the Mitochondrial intermembrane side of the membrane; that stretch reads MSTWANLGLQDSASPLMEQLIFFHDH. A helical membrane pass occupies residues 27–48; sequence ALLILVMITVLVGYLMFMLFFN. Residues 49-62 are Mitochondrial matrix-facing; sequence SYVNRFLLHGQLIE. Residues 63-82 traverse the membrane as a helical segment; that stretch reads MIWTILPAIILLFIAMPSLR. Residues 83–229 are Mitochondrial intermembrane-facing; sequence LLYLLDEINE…IKWISNSVNS (147 aa). Cu cation-binding residues include His-161, Cys-196, Glu-198, Cys-200, His-204, and Met-207. Glu-198 serves as a coordination point for Mg(2+).

The protein belongs to the cytochrome c oxidase subunit 2 family. Component of the cytochrome c oxidase (complex IV, CIV), a multisubunit enzyme composed of a catalytic core of 3 subunits and several supernumerary subunits. The complex exists as a monomer or a dimer and forms supercomplexes (SCs) in the inner mitochondrial membrane with ubiquinol-cytochrome c oxidoreductase (cytochrome b-c1 complex, complex III, CIII). Cu cation serves as cofactor.

It is found in the mitochondrion inner membrane. It carries out the reaction 4 Fe(II)-[cytochrome c] + O2 + 8 H(+)(in) = 4 Fe(III)-[cytochrome c] + 2 H2O + 4 H(+)(out). Functionally, component of the cytochrome c oxidase, the last enzyme in the mitochondrial electron transport chain which drives oxidative phosphorylation. The respiratory chain contains 3 multisubunit complexes succinate dehydrogenase (complex II, CII), ubiquinol-cytochrome c oxidoreductase (cytochrome b-c1 complex, complex III, CIII) and cytochrome c oxidase (complex IV, CIV), that cooperate to transfer electrons derived from NADH and succinate to molecular oxygen, creating an electrochemical gradient over the inner membrane that drives transmembrane transport and the ATP synthase. Cytochrome c oxidase is the component of the respiratory chain that catalyzes the reduction of oxygen to water. Electrons originating from reduced cytochrome c in the intermembrane space (IMS) are transferred via the dinuclear copper A center (CU(A)) of subunit 2 and heme A of subunit 1 to the active site in subunit 1, a binuclear center (BNC) formed by heme A3 and copper B (CU(B)). The BNC reduces molecular oxygen to 2 water molecules using 4 electrons from cytochrome c in the IMS and 4 protons from the mitochondrial matrix. The polypeptide is Cytochrome c oxidase subunit 2 (mt:CoII) (Drosophila ambigua (Fruit fly)).